An 876-amino-acid polypeptide reads, in one-letter code: Radial spoke head 10 homolog B (876 aa).

The span at 1–16 shows a compositional bias: basic and acidic residues; it reads MVKEKKKADKKGDKSA. A disordered region spans residues 1–71; that stretch reads MVKEKKKADK…VQMEQSEEET (71 aa). The span at 17-37 shows a compositional bias: polar residues; the sequence is RSPSSISDNPEASKQDSNASK. The span at 39 to 50 shows a compositional bias: low complexity; sequence EVAPSAVVPVVE. MORN repeat units lie at residues 86 to 108, 109 to 129, 132 to 154, 155 to 172, 179 to 196, 204 to 225, 227 to 244, 251 to 268, 284 to 305, and 307 to 328; these read YEGEKVRGLYEGEGFAVFQGGNT, YHGMFSEGLMHGQGTYIWADG, YEGDFVKNIPMNHGVYTWPDGST, YEGEVTNGMRNGFGMFKC, YIGHWCHGKRHGKGSIYY, YEGDWVYNIKKGWGIRCYKSGN, YEGQWENNMRHGEGRMRW, YTGHWEKGIQNGFGTHTW, YIGEFVNGFRHGQGKFYYASGA, and YEGEWASNKKQGRGRMTFKNGH. The segment covering 356–372 has biased composition (polar residues); the sequence is WSDASQRSRQPRGSSVS. The disordered stretch occupies residues 356 to 386; the sequence is WSDASQRSRQPRGSSVSAVREPETLRKLDGS. The segment covering 375 to 386 has biased composition (basic and acidic residues); sequence REPETLRKLDGS. Residues 790-832 adopt a coiled-coil conformation; that stretch reads LKEKVKENQLQEAELAQQRQIENEELEARLNILREEEARKQDF. The tract at residues 839-876 is disordered; sequence LKEPSEIPASQPLTPSPPKEDLASIQTSKASPGKKKKK.

As to quaternary structure, interacts with RSPH6A. Does not appear to be part of the axonemal radial spoke complexes 1 or 2. As to expression, expressed in ependymal cells (at protein level).

The protein resides in the cytoplasm. The protein localises to the cytoskeleton. Its subcellular location is the cilium axoneme. It is found in the cell projection. It localises to the cilium. The protein resides in the flagellum. In terms of biological role, may function as part of the axonemal radial spoke complex 3 (RS3). Radial spoke complexes are important for ciliary motility. In Mus musculus (Mouse), this protein is Radial spoke head 10 homolog B.